A 110-amino-acid chain; its full sequence is Subtilisin inhibitor-like protein 1 (110 aa).

Intrachain disulfides connect cysteine 30-cysteine 44 and cysteine 68-cysteine 98.

It belongs to the protease inhibitor I16 (SSI) family. As to quaternary structure, homodimer.

Its subcellular location is the secreted. Strong inhibitor of subtilisin BPN'. The sequence is that of Subtilisin inhibitor-like protein 1 from Streptomyces cacaoi.